Consider the following 346-residue polypeptide: UDP-3-O-acylglucosamine N-acyltransferase (346 aa).

Histidine 253 functions as the Proton acceptor in the catalytic mechanism.

Belongs to the transferase hexapeptide repeat family. LpxD subfamily. Homotrimer.

It carries out the reaction a UDP-3-O-[(3R)-3-hydroxyacyl]-alpha-D-glucosamine + a (3R)-hydroxyacyl-[ACP] = a UDP-2-N,3-O-bis[(3R)-3-hydroxyacyl]-alpha-D-glucosamine + holo-[ACP] + H(+). It functions in the pathway bacterial outer membrane biogenesis; LPS lipid A biosynthesis. In terms of biological role, catalyzes the N-acylation of UDP-3-O-acylglucosamine using 3-hydroxyacyl-ACP as the acyl donor. Is involved in the biosynthesis of lipid A, a phosphorylated glycolipid that anchors the lipopolysaccharide to the outer membrane of the cell. The sequence is that of UDP-3-O-acylglucosamine N-acyltransferase from Rickettsia conorii (strain ATCC VR-613 / Malish 7).